The chain runs to 237 residues: Proteasome subunit alpha type-5 (237 aa).

Belongs to the peptidase T1A family. The 26S proteasome consists of a 20S proteasome core and two 19S regulatory subunits. The 20S proteasome core is composed of 28 subunits that are arranged in four stacked rings, resulting in a barrel-shaped structure. The two end rings are each formed by seven alpha subunits, and the two central rings are each formed by seven beta subunits. The catalytic chamber with the active sites is on the inside of the barrel.

Its subcellular location is the cytoplasm. The protein resides in the nucleus. Functionally, the proteasome is a multicatalytic proteinase complex which is characterized by its ability to cleave peptides with Arg, Phe, Tyr, Leu, and Glu adjacent to the leaving group at neutral or slightly basic pH. The proteasome has an ATP-dependent proteolytic activity. This is Proteasome subunit alpha type-5 (PAE1) from Oryza sativa subsp. japonica (Rice).